A 414-amino-acid polypeptide reads, in one-letter code: Serine hydroxymethyltransferase (414 aa).

(6S)-5,6,7,8-tetrahydrofolate-binding positions include L121 and 125-127 (GHL). K229 carries the post-translational modification N6-(pyridoxal phosphate)lysine.

This sequence belongs to the SHMT family. As to quaternary structure, homodimer. Pyridoxal 5'-phosphate serves as cofactor.

The protein localises to the cytoplasm. The catalysed reaction is (6R)-5,10-methylene-5,6,7,8-tetrahydrofolate + glycine + H2O = (6S)-5,6,7,8-tetrahydrofolate + L-serine. It functions in the pathway one-carbon metabolism; tetrahydrofolate interconversion. The protein operates within amino-acid biosynthesis; glycine biosynthesis; glycine from L-serine: step 1/1. Functionally, catalyzes the reversible interconversion of serine and glycine with tetrahydrofolate (THF) serving as the one-carbon carrier. This reaction serves as the major source of one-carbon groups required for the biosynthesis of purines, thymidylate, methionine, and other important biomolecules. Also exhibits THF-independent aldolase activity toward beta-hydroxyamino acids, producing glycine and aldehydes, via a retro-aldol mechanism. The polypeptide is Serine hydroxymethyltransferase (Acidovorax ebreus (strain TPSY) (Diaphorobacter sp. (strain TPSY))).